The primary structure comprises 300 residues: UDP-3-O-acyl-N-acetylglucosamine deacetylase (300 aa).

Zn(2+) contacts are provided by H78, H237, and D241. H264 serves as the catalytic Proton donor.

It belongs to the LpxC family. Zn(2+) serves as cofactor.

The catalysed reaction is a UDP-3-O-[(3R)-3-hydroxyacyl]-N-acetyl-alpha-D-glucosamine + H2O = a UDP-3-O-[(3R)-3-hydroxyacyl]-alpha-D-glucosamine + acetate. It functions in the pathway glycolipid biosynthesis; lipid IV(A) biosynthesis; lipid IV(A) from (3R)-3-hydroxytetradecanoyl-[acyl-carrier-protein] and UDP-N-acetyl-alpha-D-glucosamine: step 2/6. Functionally, catalyzes the hydrolysis of UDP-3-O-myristoyl-N-acetylglucosamine to form UDP-3-O-myristoylglucosamine and acetate, the committed step in lipid A biosynthesis. This Acinetobacter baumannii (strain ATCC 17978 / DSM 105126 / CIP 53.77 / LMG 1025 / NCDC KC755 / 5377) protein is UDP-3-O-acyl-N-acetylglucosamine deacetylase.